The sequence spans 353 residues: S-adenosylmethionine:tRNA ribosyltransferase-isomerase (353 aa).

It belongs to the QueA family. In terms of assembly, monomer.

The protein resides in the cytoplasm. It catalyses the reaction 7-aminomethyl-7-carbaguanosine(34) in tRNA + S-adenosyl-L-methionine = epoxyqueuosine(34) in tRNA + adenine + L-methionine + 2 H(+). The protein operates within tRNA modification; tRNA-queuosine biosynthesis. In terms of biological role, transfers and isomerizes the ribose moiety from AdoMet to the 7-aminomethyl group of 7-deazaguanine (preQ1-tRNA) to give epoxyqueuosine (oQ-tRNA). The chain is S-adenosylmethionine:tRNA ribosyltransferase-isomerase from Dinoroseobacter shibae (strain DSM 16493 / NCIMB 14021 / DFL 12).